The primary structure comprises 350 residues: D-alanine--D-alanine ligase (350 aa).

One can recognise an ATP-grasp domain in the interval 135–335 (KLYAKNLGVK…LAQSLPKTPK (201 aa)). 164 to 219 (KPSFNFPFIVKPNNAGSSLGVSVVKEEKELAYALDGAFEYSKEVLIEPFIQRVKEY) contributes to the ATP binding site. Mg(2+) is bound by residues D291, E303, and N305.

This sequence belongs to the D-alanine--D-alanine ligase family. Mg(2+) serves as cofactor. The cofactor is Mn(2+).

It is found in the cytoplasm. It carries out the reaction 2 D-alanine + ATP = D-alanyl-D-alanine + ADP + phosphate + H(+). It participates in cell wall biogenesis; peptidoglycan biosynthesis. Cell wall formation. This is D-alanine--D-alanine ligase from Helicobacter acinonychis (strain Sheeba).